The chain runs to 501 residues: Glutamate--tRNA ligase (501 aa).

A 'HIGH' region motif is present at residues 10–20; that stretch reads PSPTGSLHIGG. The 'KMSKS' region motif lies at 251-255; the sequence is KLSKR. Lys254 contributes to the ATP binding site.

Belongs to the class-I aminoacyl-tRNA synthetase family. Glutamate--tRNA ligase type 1 subfamily. In terms of assembly, monomer.

The protein resides in the cytoplasm. The enzyme catalyses tRNA(Glu) + L-glutamate + ATP = L-glutamyl-tRNA(Glu) + AMP + diphosphate. Its function is as follows. Catalyzes the attachment of glutamate to tRNA(Glu) in a two-step reaction: glutamate is first activated by ATP to form Glu-AMP and then transferred to the acceptor end of tRNA(Glu). This is Glutamate--tRNA ligase from Desulforudis audaxviator (strain MP104C).